A 266-amino-acid polypeptide reads, in one-letter code: Diphthine synthase (266 aa).

Residues Leu9, Asp84, Val87, 112–113, Leu169, Ala210, and His235 each bind S-adenosyl-L-methionine; that span reads SI.

Belongs to the diphthine synthase family. In terms of assembly, homodimer.

It carries out the reaction 2-[(3S)-amino-3-carboxypropyl]-L-histidyl-[translation elongation factor 2] + 3 S-adenosyl-L-methionine = diphthine-[translation elongation factor 2] + 3 S-adenosyl-L-homocysteine + 3 H(+). It participates in protein modification; peptidyl-diphthamide biosynthesis. Functionally, S-adenosyl-L-methionine-dependent methyltransferase that catalyzes the trimethylation of the amino group of the modified target histidine residue in translation elongation factor 2 (EF-2), to form an intermediate called diphthine. The three successive methylation reactions represent the second step of diphthamide biosynthesis. The polypeptide is Diphthine synthase (Methanosarcina barkeri (strain Fusaro / DSM 804)).